Reading from the N-terminus, the 138-residue chain is Acidic phospholipase A2 ammodytin I1 (138 aa).

A signal peptide spans 1–16; that stretch reads MRILWIVAVCLIGAEG. 7 disulfide bridges follow: Cys-42–Cys-131, Cys-44–Cys-60, Cys-59–Cys-111, Cys-65–Cys-138, Cys-66–Cys-104, Cys-73–Cys-97, and Cys-91–Cys-102. Ca(2+)-binding residues include Tyr-43, Gly-45, and Gly-47. The active site involves His-63. Residue Asp-64 participates in Ca(2+) binding. Asp-105 is an active-site residue.

Belongs to the phospholipase A2 family. Group II subfamily. D49 sub-subfamily. It depends on Ca(2+) as a cofactor. Expressed by the venom gland.

The protein resides in the secreted. The catalysed reaction is a 1,2-diacyl-sn-glycero-3-phosphocholine + H2O = a 1-acyl-sn-glycero-3-phosphocholine + a fatty acid + H(+). Its function is as follows. Snake venom phospholipase A2 (PLA2) that has enzymatic activity but is non-toxic. PLA2 catalyzes the calcium-dependent hydrolysis of the 2-acyl groups in 3-sn-phosphoglycerides. In Vipera ammodytes ammodytes (Western sand viper), this protein is Acidic phospholipase A2 ammodytin I1.